The sequence spans 101 residues: ATP-dependent Clp protease adapter protein ClpS (101 aa).

The protein belongs to the ClpS family. As to quaternary structure, binds to the N-terminal domain of the chaperone ClpA.

Its function is as follows. Involved in the modulation of the specificity of the ClpAP-mediated ATP-dependent protein degradation. The polypeptide is ATP-dependent Clp protease adapter protein ClpS (Mycobacterium bovis (strain ATCC BAA-935 / AF2122/97)).